Here is a 1138-residue protein sequence, read N- to C-terminus: MATGGDAEEEQVVPNEEDEADVRAVQARYLRSPSPSQYSVVSEAETESIFMEPIHLSSAVAAKQIINEELKPRGLRTDTECPGMLESAEQLLVEDLYNRVREKMDDRSLFNTPCVLDLQRALTQDRQEAPRNEVDEVWPNVFIAEKSVAVNKGRLKRLGITHILNAAHGTGVYTGSEFYTGLEIQYLGVEVDDFPEVDISQHFRKAAEFLDEALLTYRGKVLVSSEMGISRSAVLVVAYLMIFHSMAILEALMTVRRKRAIYPNDGFLKQLRELNEKLMEEREEEDGEEESEEDAGSMLGARVNSLMVEEEDDATSHLSGSSLGKASQVSKPVTLIDDEEEEKKLYEEWRKGQGFPKGEAAQGRKGRSCSMSSAQDGDDCEDEDVERIIQEWQSRNERYQAKGREQWNREEEEEEENSYSSRRRRHTLSESSASESVSSHDIRILKQQLERSTQSRRGRYRSDSESSESTWDMWNERLVEIEKEAARKYRSKSKREELDGDCSEAGGRVREDDEESVLSEASSFYNFCSRNKDKLTPLERWKIKRIQFGFHKKDSEAGDGGSEHGTEEAAAGEKNLSDVNLTAYQAWKLKHQKKVGSENKEEVVEMSKGEDTVLAKKRQRRLELLERSRQTLEESQSMGSWEADSSTASRSIPLSAFSSAAPSVSADGDTASVLSTQSHRSHASNMPATPLPNLPVGPGDTISIASIQNWIANVVNETLAQKQNEMLLLSRPPSVASMKAAPAACGLGGDDQLSVLSTSLSGCLPPPSQGRPSSDVQSVLSSTSSLTSRAEGSGNKVRGTSKPIYSLFADNVDLKELGRKEKEMQMELQEKMSEYKMEKLASDNKRSSLFKKKKAKDDEDMSVGDRDEDTDSAIGSFRYSSRSNSQKPETDASSSLAISDHYRNGRSMGNEMDSNINTWLSGLRMEEKSPPQSDWSGSSRGRYTRSSLLRETESKSCSYKFSKSRSQEQDTSFHEANGDTVRNTSRFSSSTTKEAREMHKFSRSTFSETSSSREESPEPYFFRRTPEPSDGEESPEPRRPNWTRPRDWEDVEESSKSDFAEFGAKRKFTQSFMRSEEEGEKERTENREEGRFASGRQSQYRRSTNQQEEEEMDDEAIIAAWRKRQEETRTKLQRRRED.

Residues 1 to 20 are disordered; it reads MATGGDAEEEQVVPNEEDEA. Residues 132–280 form the Tyrosine-protein phosphatase domain; sequence NEVDEVWPNV…LRELNEKLME (149 aa). The residue at position 291 (Ser-291) is a Phosphoserine. Disordered regions lie at residues 309-336, 348-473, 486-515, 552-575, 592-618, 660-694, 761-800, and 850-1117; these read EEED…VTLI, EWRK…TWDM, ARKY…DDEE, KKDS…GEKN, QKKV…AKKR, AAPS…LPNL, SGCL…VRGT, and FKKK…DEAI. The segment covering 316–331 has biased composition (polar residues); sequence SHLSGSSLGKASQVSK. Ser-373 is subject to Phosphoserine. Over residues 376–385 the composition is skewed to acidic residues; sequence DGDDCEDEDV. Residues 386–409 are compositionally biased toward basic and acidic residues; that stretch reads ERIIQEWQSRNERYQAKGREQWNR. Thr-427 is subject to Phosphothreonine. Ser-503 and Ser-555 each carry phosphoserine. 2 stretches are compositionally biased toward basic and acidic residues: residues 552 to 567 and 595 to 614; these read KKDS…HGTE and VGSE…DTVL. A compositionally biased stretch (polar residues) spans 672–687; the sequence is SVLSTQSHRSHASNMP. Residues 773–788 are compositionally biased toward low complexity; sequence SSDVQSVLSSTSSLTS. The span at 858–871 shows a compositional bias: acidic residues; sequence DEDMSVGDRDEDTD. At Ser-862 the chain carries Phosphoserine. Residues 878–897 are compositionally biased toward polar residues; that stretch reads RYSSRSNSQKPETDASSSLA. Ser-929 carries the post-translational modification Phosphoserine. Positions 936 to 947 are enriched in low complexity; the sequence is SGSSRGRYTRSS. The segment covering 965–977 has biased composition (basic and acidic residues); sequence RSQEQDTSFHEAN. Phosphoserine is present on Ser-966. A compositionally biased stretch (polar residues) spans 980 to 992; the sequence is TVRNTSRFSSSTT. At Ser-1016 the chain carries Phosphoserine. Composition is skewed to basic and acidic residues over residues 1035–1059 and 1074–1091; these read PEPR…KSDF and RSEE…EEGR. Polar residues predominate over residues 1095 to 1106; that stretch reads GRQSQYRRSTNQ. A compositionally biased stretch (acidic residues) spans 1107–1116; the sequence is QEEEEMDDEA.

Belongs to the protein-tyrosine phosphatase family. Non-receptor class dual specificity subfamily.

The protein resides in the cytoplasm. The protein localises to the myofibril. It localises to the sarcomere. In terms of biological role, may be required for myofiber maturation. In Mus musculus (Mouse), this protein is Serine/threonine/tyrosine-interacting-like protein 2 (Styxl2).